The sequence spans 378 residues: Actin-related protein 2/3 complex subunit 1B (378 aa).

WD repeat units lie at residues 8–47 (RFAE…HWER), 53–92 (KHDQ…WVPT), 97–138 (RLNR…WVSK), 143–182 (RHES…VDTK), 203–242 (LSYS…PLAQ), 257–295 (ISEK…KAAS), and 331–375 (VHDN…QELG). The segment at 319-340 (TTANDASDSRGGVHDNSITSIV) is disordered.

Belongs to the WD repeat ARPC1 family. As to quaternary structure, component of the Arp2/3 complex composed of ARP2, ARP3, ARPC1/p41-ARC, ARPC2/p34-ARC, ARPC3/p21-ARC, ARPC4/p20-ARC and ARPC5/p16-ARC. Expressed at low levels in all tissues with a relatively highest expression in inflorescences.

It localises to the cytoplasm. The protein localises to the cytoskeleton. Functions as a component of the Arp2/3 complex which is involved in regulation of actin polymerization and together with an activating nucleation-promoting factor (NPF) mediates the formation of branched actin networks. Arp2/3 complex plays a critical role in the control of cell morphogenesis via the modulation of cell polarity development. The chain is Actin-related protein 2/3 complex subunit 1B (ARPC1B) from Arabidopsis thaliana (Mouse-ear cress).